Reading from the N-terminus, the 197-residue chain is uncharacterized protein (197 aa).

The disordered stretch occupies residues 1 to 135; the sequence is MKTPWKFLAR…ERGKRANARV (135 aa). Residues 14–32 show a composition bias toward polar residues; it reads RQPSGKTQESSAGNDTGSK. The span at 83–96 shows a compositional bias: basic and acidic residues; the sequence is IHADEAQTTARDEA. Basic residues predominate over residues 116–132; sequence SQRKPRIKRRERGKRAN.

This sequence to Rhizobium NGR234A y4nF and y4aO.

This is an uncharacterized protein from Rhizobium meliloti (strain 1021) (Ensifer meliloti).